The following is a 315-amino-acid chain: Protein ADP-ribosyltransferase (315 aa).

Positions 13-299 (LMDEKTKQAE…TTALRNDSTT (287 aa)) constitute a Deacetylase sirtuin-type domain. NAD(+) contacts are provided by residues A40, 123 to 126 (TNAD), and Q143. Residues C151, C155, C186, and C189 each contribute to the Zn(2+) site. Residues 238–240 (YTT), N264, Y268, and I285 each bind NAD(+).

Belongs to the sirtuin family. Class M subfamily. The cofactor is Zn(2+).

The catalysed reaction is L-aspartyl-[protein] + NAD(+) = 4-O-(ADP-D-ribosyl)-L-aspartyl-[protein] + nicotinamide. Is inhibited by Tenovin-6 in vitro, but not by nicotinamide. In terms of biological role, catalyzes specifically the mono-ADP-ribosylation of GcvH-L (SAV0324). This activity is dependent on prior lipoylation of the target protein. May be involved in the modulation of the response to host-derived oxidative stress. In contrast to other sirtuin classes, lacks protein deacylase activity, being unable to catalyze delipoylation, debiotinylation, deacetylation and desuccinylation of proteins. The protein is Protein ADP-ribosyltransferase of Staphylococcus aureus (strain Mu50 / ATCC 700699).